Reading from the N-terminus, the 734-residue chain is Polyribonucleotide nucleotidyltransferase (734 aa).

Residues Asp-505 and Asp-511 each contribute to the Mg(2+) site. The KH domain occupies 572–631 (PKLTTIQIPVDAIGMVIGKGGETIRSITEETGAEINIEDDGTVTIASASGEGASAALETI). The 75-residue stretch at 641–715 (GTVYSGKVRD…GKTRFALSIK (75 aa)) folds into the S1 motif domain.

The protein belongs to the polyribonucleotide nucleotidyltransferase family. The cofactor is Mg(2+).

It localises to the cytoplasm. It carries out the reaction RNA(n+1) + phosphate = RNA(n) + a ribonucleoside 5'-diphosphate. Its function is as follows. Involved in mRNA degradation. Catalyzes the phosphorolysis of single-stranded polyribonucleotides processively in the 3'- to 5'-direction. The sequence is that of Polyribonucleotide nucleotidyltransferase from Prosthecochloris aestuarii (strain DSM 271 / SK 413).